A 291-amino-acid polypeptide reads, in one-letter code: 4-hydroxy-tetrahydrodipicolinate synthase (291 aa).

Residue Thr44 participates in pyruvate binding. The active-site Proton donor/acceptor is the Tyr132. Residue Lys160 is the Schiff-base intermediate with substrate of the active site. Val202 is a binding site for pyruvate.

This sequence belongs to the DapA family. Homotetramer; dimer of dimers.

The protein resides in the cytoplasm. It carries out the reaction L-aspartate 4-semialdehyde + pyruvate = (2S,4S)-4-hydroxy-2,3,4,5-tetrahydrodipicolinate + H2O + H(+). It participates in amino-acid biosynthesis; L-lysine biosynthesis via DAP pathway; (S)-tetrahydrodipicolinate from L-aspartate: step 3/4. Functionally, catalyzes the condensation of (S)-aspartate-beta-semialdehyde [(S)-ASA] and pyruvate to 4-hydroxy-tetrahydrodipicolinate (HTPA). This Clostridium perfringens (strain 13 / Type A) protein is 4-hydroxy-tetrahydrodipicolinate synthase.